We begin with the raw amino-acid sequence, 277 residues long: Undecaprenyl-diphosphatase (277 aa).

The next 7 membrane-spanning stretches (helical) occupy residues 3–23, 43–63, 85–105, 109–129, 189–209, 218–238, and 249–269; these read IVLL…EFLP, VGKV…ILVY, LNVL…GKAI, LFTP…ILWA, TDFS…YSLF, ADLP…WLCI, and SFVG…ATAW.

This sequence belongs to the UppP family.

It is found in the cell inner membrane. The catalysed reaction is di-trans,octa-cis-undecaprenyl diphosphate + H2O = di-trans,octa-cis-undecaprenyl phosphate + phosphate + H(+). Its function is as follows. Catalyzes the dephosphorylation of undecaprenyl diphosphate (UPP). Confers resistance to bacitracin. In Albidiferax ferrireducens (strain ATCC BAA-621 / DSM 15236 / T118) (Rhodoferax ferrireducens), this protein is Undecaprenyl-diphosphatase.